The chain runs to 202 residues: Nucleoside triphosphate pyrophosphatase (202 aa).

The active-site Proton acceptor is Asp-79.

The protein belongs to the Maf family. It depends on a divalent metal cation as a cofactor.

It localises to the cytoplasm. It catalyses the reaction a ribonucleoside 5'-triphosphate + H2O = a ribonucleoside 5'-phosphate + diphosphate + H(+). The catalysed reaction is a 2'-deoxyribonucleoside 5'-triphosphate + H2O = a 2'-deoxyribonucleoside 5'-phosphate + diphosphate + H(+). Functionally, nucleoside triphosphate pyrophosphatase. May have a dual role in cell division arrest and in preventing the incorporation of modified nucleotides into cellular nucleic acids. This chain is Nucleoside triphosphate pyrophosphatase, found in Nitrobacter winogradskyi (strain ATCC 25391 / DSM 10237 / CIP 104748 / NCIMB 11846 / Nb-255).